Reading from the N-terminus, the 684-residue chain is Sorbicillinoid biosynthetic cluster transcription factor 2 (684 aa).

Residues 114 to 151 form a disordered region; it reads ISSAPSLETPPESVAASPPTVDSIPVSHHVNEDPEAEP.

Its subcellular location is the nucleus. Transcription factor that acts in concert with sorR1 which is a transcriptional activator of the gene cluster that mediates the biosynthesis of sorbicillinoids, a diverse group of yellow secondary metabolites that restrict growth of competing pathogenic fungi but not of bacteria. The chain is Sorbicillinoid biosynthetic cluster transcription factor 2 from Penicillium rubens (strain ATCC 28089 / DSM 1075 / NRRL 1951 / Wisconsin 54-1255) (Penicillium chrysogenum).